The following is a 432-amino-acid chain: Muscle cell intermediate filament protein OV71 (432 aa).

The coil 1B stretch occupies residues 1 to 111 (KLIDELEEYK…RVHDQEISEL (111 aa)). In terms of domain architecture, IF rod spans 1-277 (KLIDELEEYK…KMLEGEENRA (277 aa)). Residues 112 to 128 (QAMAARDTTSENREYFK) are linker 12. Residues 129–277 (NELSSAIRDI…KMLEGEENRA (149 aa)) form a coil 2 region. The interval 278-432 (GLRQLVEQVV…HIQRSSHTIS (155 aa)) is tail. Residues 310–427 (SRTSFQRSAK…EERASHIQRS (118 aa)) enclose the LTD domain.

Belongs to the intermediate filament family.

The protein is Muscle cell intermediate filament protein OV71 (OV71) of Onchocerca volvulus.